Reading from the N-terminus, the 143-residue chain is Large ribosomal subunit protein uL11 (143 aa).

Belongs to the universal ribosomal protein uL11 family. Part of the ribosomal stalk of the 50S ribosomal subunit. Interacts with L10 and the large rRNA to form the base of the stalk. L10 forms an elongated spine to which L12 dimers bind in a sequential fashion forming a multimeric L10(L12)X complex. In terms of processing, one or more lysine residues are methylated.

Functionally, forms part of the ribosomal stalk which helps the ribosome interact with GTP-bound translation factors. In Rhizobium etli (strain CIAT 652), this protein is Large ribosomal subunit protein uL11.